We begin with the raw amino-acid sequence, 251 residues long: Coproheme decarboxylase (251 aa).

Fe-coproporphyrin III-binding positions include Arg-133, 147-151 (YPMSK), His-174, Gln-187, and Ser-225. Residue Tyr-147 is part of the active site.

The protein belongs to the ChdC family. Type 1 subfamily. Fe-coproporphyrin III is required as a cofactor.

The enzyme catalyses Fe-coproporphyrin III + 2 H2O2 + 2 H(+) = heme b + 2 CO2 + 4 H2O. It carries out the reaction Fe-coproporphyrin III + H2O2 + H(+) = harderoheme III + CO2 + 2 H2O. It catalyses the reaction harderoheme III + H2O2 + H(+) = heme b + CO2 + 2 H2O. The protein operates within porphyrin-containing compound metabolism; protoheme biosynthesis. Functionally, involved in coproporphyrin-dependent heme b biosynthesis. Catalyzes the decarboxylation of Fe-coproporphyrin III (coproheme) to heme b (protoheme IX), the last step of the pathway. The reaction occurs in a stepwise manner with a three-propionate intermediate. The sequence is that of Coproheme decarboxylase from Listeria innocua serovar 6a (strain ATCC BAA-680 / CLIP 11262).